Consider the following 68-residue polypeptide: ATP synthase F(0) complex subunit 8 (68 aa).

Residues 8 to 24 (VWPTIITSMLLTLFLLM) form a helical membrane-spanning segment. Lys-54 bears the N6-acetyllysine; alternate mark. Position 54 is an N6-succinyllysine; alternate (Lys-54). At Lys-57 the chain carries N6-acetyllysine.

Belongs to the ATPase protein 8 family. Component of the ATP synthase complex composed at least of ATP5F1A/subunit alpha, ATP5F1B/subunit beta, ATP5MC1/subunit c (homooctomer), MT-ATP6/subunit a, MT-ATP8/subunit 8, ATP5ME/subunit e, ATP5MF/subunit f, ATP5MG/subunit g, ATP5MK/subunit k, ATP5MJ/subunit j, ATP5F1C/subunit gamma, ATP5F1D/subunit delta, ATP5F1E/subunit epsilon, ATP5PF/subunit F6, ATP5PB/subunit b, ATP5PD/subunit d, ATP5PO/subunit OSCP. ATP synthase complex consists of a soluble F(1) head domain (subunits alpha(3) and beta(3)) - the catalytic core - and a membrane F(0) domain - the membrane proton channel (subunits c, a, 8, e, f, g, k and j). These two domains are linked by a central stalk (subunits gamma, delta, and epsilon) rotating inside the F1 region and a stationary peripheral stalk (subunits F6, b, d, and OSCP). Interacts with PRICKLE3.

It localises to the mitochondrion membrane. In terms of biological role, subunit 8, of the mitochondrial membrane ATP synthase complex (F(1)F(0) ATP synthase or Complex V) that produces ATP from ADP in the presence of a proton gradient across the membrane which is generated by electron transport complexes of the respiratory chain. ATP synthase complex consist of a soluble F(1) head domain - the catalytic core - and a membrane F(1) domain - the membrane proton channel. These two domains are linked by a central stalk rotating inside the F(1) region and a stationary peripheral stalk. During catalysis, ATP synthesis in the catalytic domain of F(1) is coupled via a rotary mechanism of the central stalk subunits to proton translocation. In vivo, can only synthesize ATP although its ATP hydrolase activity can be activated artificially in vitro. Part of the complex F(0) domain. This chain is ATP synthase F(0) complex subunit 8, found in Symphalangus syndactylus (Siamang).